The chain runs to 236 residues: 2-C-methyl-D-erythritol 4-phosphate cytidylyltransferase (236 aa).

It belongs to the IspD/TarI cytidylyltransferase family. IspD subfamily. Homodimer.

The catalysed reaction is 2-C-methyl-D-erythritol 4-phosphate + CTP + H(+) = 4-CDP-2-C-methyl-D-erythritol + diphosphate. The protein operates within isoprenoid biosynthesis; isopentenyl diphosphate biosynthesis via DXP pathway; isopentenyl diphosphate from 1-deoxy-D-xylulose 5-phosphate: step 2/6. In terms of biological role, catalyzes the formation of 4-diphosphocytidyl-2-C-methyl-D-erythritol from CTP and 2-C-methyl-D-erythritol 4-phosphate (MEP). This chain is 2-C-methyl-D-erythritol 4-phosphate cytidylyltransferase, found in Escherichia coli O45:K1 (strain S88 / ExPEC).